The following is a 62-amino-acid chain: UPF0434 protein R03186 (62 aa).

It belongs to the UPF0434 family.

This is UPF0434 protein R03186 from Rhizobium meliloti (strain 1021) (Ensifer meliloti).